Reading from the N-terminus, the 336-residue chain is F420-dependent glucose-6-phosphate dehydrogenase (336 aa).

Asp39 serves as a coordination point for coenzyme F420-(gamma-Glu)n. Catalysis depends on His40, which acts as the Proton donor. Coenzyme F420-(gamma-Glu)n is bound by residues Thr76 and 107–108 (TG). Glu109 serves as the catalytic Proton acceptor. Coenzyme F420-(gamma-Glu)n contacts are provided by residues Asn112, 177–178 (GG), and 180–181 (LV). Thr195, Lys198, Lys259, and Arg283 together coordinate substrate.

The protein belongs to the F420-dependent glucose-6-phosphate dehydrogenase family. As to quaternary structure, homodimer.

The enzyme catalyses oxidized coenzyme F420-(gamma-L-Glu)(n) + D-glucose 6-phosphate + H(+) = 6-phospho-D-glucono-1,5-lactone + reduced coenzyme F420-(gamma-L-Glu)(n). Catalyzes the coenzyme F420-dependent oxidation of glucose 6-phosphate (G6P) to 6-phosphogluconolactone. The protein is F420-dependent glucose-6-phosphate dehydrogenase of Nocardia farcinica (strain IFM 10152).